Here is a 317-residue protein sequence, read N- to C-terminus: tRNA dimethylallyltransferase (317 aa).

14–21 (GPTAVGKT) is a binding site for ATP. Position 16-21 (16-21 (TAVGKT)) interacts with substrate. The interaction with substrate tRNA stretch occupies residues 39–42 (DSMQ).

The protein belongs to the IPP transferase family. Monomer. The cofactor is Mg(2+).

It carries out the reaction adenosine(37) in tRNA + dimethylallyl diphosphate = N(6)-dimethylallyladenosine(37) in tRNA + diphosphate. Functionally, catalyzes the transfer of a dimethylallyl group onto the adenine at position 37 in tRNAs that read codons beginning with uridine, leading to the formation of N6-(dimethylallyl)adenosine (i(6)A). The protein is tRNA dimethylallyltransferase of Bacillus cereus (strain AH187).